Consider the following 922-residue polypeptide: Protein translocase subunit SecA (922 aa).

Residues Gln87, 105-109, and Asp516 each bind ATP; that span reads GEGKT. Residues 867–912 form a disordered region; sequence YTAPTETGEPETLPDPRTAGAGGDGLNLPEGVRIGRNDPCPCGSGK. Residues Cys906, Cys908, Cys917, and His918 each contribute to the Zn(2+) site.

It belongs to the SecA family. As to quaternary structure, monomer and homodimer. Part of the essential Sec protein translocation apparatus which comprises SecA, SecYEG and auxiliary proteins SecDF-YajC and YidC. Requires Zn(2+) as cofactor.

It localises to the cell inner membrane. The protein resides in the cytoplasm. It catalyses the reaction ATP + H2O + cellular proteinSide 1 = ADP + phosphate + cellular proteinSide 2.. In terms of biological role, part of the Sec protein translocase complex. Interacts with the SecYEG preprotein conducting channel. Has a central role in coupling the hydrolysis of ATP to the transfer of proteins into and across the cell membrane, serving both as a receptor for the preprotein-SecB complex and as an ATP-driven molecular motor driving the stepwise translocation of polypeptide chains across the membrane. This is Protein translocase subunit SecA from Paracidovorax citrulli (strain AAC00-1) (Acidovorax citrulli).